A 449-amino-acid polypeptide reads, in one-letter code: Bifunctional protein GlmU (449 aa).

The pyrophosphorylase stretch occupies residues 1 to 226; the sequence is MVIVAVLAAG…YEEILGVNDR (226 aa). UDP-N-acetyl-alpha-D-glucosamine contacts are provided by residues 7 to 10, Lys21, Gln73, and 78 to 79; these read LAAG and GT. Asp103 is a Mg(2+) binding site. The UDP-N-acetyl-alpha-D-glucosamine site is built by Gly140, Glu155, Asn170, and Asn224. Asn224 provides a ligand contact to Mg(2+). Residues 227-247 are linker; sequence VQLAAAYQVLQNRIKKAWMQA. Positions 248 to 449 are N-acetyltransferase; that stretch reads GVTLIDPASI…VVKPNWEPEA (202 aa). Residues Arg329 and Lys347 each coordinate UDP-N-acetyl-alpha-D-glucosamine. Catalysis depends on His359, which acts as the Proton acceptor. The UDP-N-acetyl-alpha-D-glucosamine site is built by Tyr362 and Asn373. Acetyl-CoA contacts are provided by residues Ala376, 382–383, Ala419, and Arg436; that span reads NY.

In the N-terminal section; belongs to the N-acetylglucosamine-1-phosphate uridyltransferase family. The protein in the C-terminal section; belongs to the transferase hexapeptide repeat family. As to quaternary structure, homotrimer. It depends on Mg(2+) as a cofactor.

Its subcellular location is the cytoplasm. It catalyses the reaction alpha-D-glucosamine 1-phosphate + acetyl-CoA = N-acetyl-alpha-D-glucosamine 1-phosphate + CoA + H(+). The catalysed reaction is N-acetyl-alpha-D-glucosamine 1-phosphate + UTP + H(+) = UDP-N-acetyl-alpha-D-glucosamine + diphosphate. It functions in the pathway nucleotide-sugar biosynthesis; UDP-N-acetyl-alpha-D-glucosamine biosynthesis; N-acetyl-alpha-D-glucosamine 1-phosphate from alpha-D-glucosamine 6-phosphate (route II): step 2/2. Its pathway is nucleotide-sugar biosynthesis; UDP-N-acetyl-alpha-D-glucosamine biosynthesis; UDP-N-acetyl-alpha-D-glucosamine from N-acetyl-alpha-D-glucosamine 1-phosphate: step 1/1. It participates in bacterial outer membrane biogenesis; LPS lipid A biosynthesis. Catalyzes the last two sequential reactions in the de novo biosynthetic pathway for UDP-N-acetylglucosamine (UDP-GlcNAc). The C-terminal domain catalyzes the transfer of acetyl group from acetyl coenzyme A to glucosamine-1-phosphate (GlcN-1-P) to produce N-acetylglucosamine-1-phosphate (GlcNAc-1-P), which is converted into UDP-GlcNAc by the transfer of uridine 5-monophosphate (from uridine 5-triphosphate), a reaction catalyzed by the N-terminal domain. The polypeptide is Bifunctional protein GlmU (Thermosynechococcus vestitus (strain NIES-2133 / IAM M-273 / BP-1)).